A 26-amino-acid polypeptide reads, in one-letter code: QAVLGAGLPCNTTTSPIIKVCASGMK.

The active-site Acyl-thioester intermediate is Cys-21.

Belongs to the thiolase-like superfamily. Thiolase family. Homotetramer. Succinylation, adjacent to a coenzyme A binding site. Desuccinylated by SIRT5.

Its subcellular location is the mitochondrion. The enzyme catalyses 2 acetyl-CoA = acetoacetyl-CoA + CoA. The protein is Acetyl-CoA acetyltransferase of Sus scrofa (Pig).